The following is a 309-amino-acid chain: Acetylglutamate kinase (309 aa).

Residues 82 to 83 (GG), Arg-104, and Asn-206 each bind substrate.

It belongs to the acetylglutamate kinase family. ArgB subfamily.

It is found in the cytoplasm. It catalyses the reaction N-acetyl-L-glutamate + ATP = N-acetyl-L-glutamyl 5-phosphate + ADP. The protein operates within amino-acid biosynthesis; L-arginine biosynthesis; N(2)-acetyl-L-ornithine from L-glutamate: step 2/4. Functionally, catalyzes the ATP-dependent phosphorylation of N-acetyl-L-glutamate. This chain is Acetylglutamate kinase, found in Cupriavidus metallidurans (strain ATCC 43123 / DSM 2839 / NBRC 102507 / CH34) (Ralstonia metallidurans).